The primary structure comprises 501 residues: Probable malate:quinone oxidoreductase (501 aa).

The protein belongs to the MQO family. The cofactor is FAD.

The catalysed reaction is (S)-malate + a quinone = a quinol + oxaloacetate. The protein operates within carbohydrate metabolism; tricarboxylic acid cycle; oxaloacetate from (S)-malate (quinone route): step 1/1. The chain is Probable malate:quinone oxidoreductase from Mycolicibacterium paratuberculosis (strain ATCC BAA-968 / K-10) (Mycobacterium paratuberculosis).